The chain runs to 315 residues: Transcription antitermination protein NusB (315 aa).

Residues Ser-296–Asp-315 are disordered. Residues Lys-302–Asp-315 are compositionally biased toward basic and acidic residues.

It belongs to the NusB family.

Involved in transcription antitermination. Required for transcription of ribosomal RNA (rRNA) genes. Binds specifically to the boxA antiterminator sequence of the ribosomal RNA (rrn) operons. The chain is Transcription antitermination protein NusB from Psychrobacter cryohalolentis (strain ATCC BAA-1226 / DSM 17306 / VKM B-2378 / K5).